Reading from the N-terminus, the 396-residue chain is Elongation factor Tu (396 aa).

The tr-type G domain maps to 10-206 (KPHVNVGTIG…ALDTFIPEPT (197 aa)). The G1 stretch occupies residues 19–26 (GHVDHGKT). 19–26 (GHVDHGKT) is a binding site for GTP. Residue T26 coordinates Mg(2+). The interval 60 to 64 (GITIS) is G2. Positions 81–84 (DCPG) are G3. GTP-binding positions include 81 to 85 (DCPGH) and 136 to 139 (NKAD). Residues 136-139 (NKAD) form a G4 region. The G5 stretch occupies residues 174-176 (SAR).

This sequence belongs to the TRAFAC class translation factor GTPase superfamily. Classic translation factor GTPase family. EF-Tu/EF-1A subfamily. As to quaternary structure, monomer.

It localises to the cytoplasm. It catalyses the reaction GTP + H2O = GDP + phosphate + H(+). Functionally, GTP hydrolase that promotes the GTP-dependent binding of aminoacyl-tRNA to the A-site of ribosomes during protein biosynthesis. In Xanthomonas oryzae pv. oryzae (strain MAFF 311018), this protein is Elongation factor Tu.